The primary structure comprises 424 residues: Serine--tRNA ligase (424 aa).

230-232 (TAE) contributes to the L-serine binding site. 261–263 (RAE) contacts ATP. Residue Glu284 participates in L-serine binding. Residue 348-351 (EISS) coordinates ATP. Residue Ser384 participates in L-serine binding.

Belongs to the class-II aminoacyl-tRNA synthetase family. Type-1 seryl-tRNA synthetase subfamily. Homodimer. The tRNA molecule binds across the dimer.

It localises to the cytoplasm. The enzyme catalyses tRNA(Ser) + L-serine + ATP = L-seryl-tRNA(Ser) + AMP + diphosphate + H(+). The catalysed reaction is tRNA(Sec) + L-serine + ATP = L-seryl-tRNA(Sec) + AMP + diphosphate + H(+). Its pathway is aminoacyl-tRNA biosynthesis; selenocysteinyl-tRNA(Sec) biosynthesis; L-seryl-tRNA(Sec) from L-serine and tRNA(Sec): step 1/1. In terms of biological role, catalyzes the attachment of serine to tRNA(Ser). Is also able to aminoacylate tRNA(Sec) with serine, to form the misacylated tRNA L-seryl-tRNA(Sec), which will be further converted into selenocysteinyl-tRNA(Sec). In Carboxydothermus hydrogenoformans (strain ATCC BAA-161 / DSM 6008 / Z-2901), this protein is Serine--tRNA ligase.